We begin with the raw amino-acid sequence, 611 residues long: Oligoendopeptidase F homolog (611 aa).

His-384 provides a ligand contact to Zn(2+). Glu-385 is a catalytic residue. Positions 388 and 391 each coordinate Zn(2+).

The protein belongs to the peptidase M3B family. Zn(2+) serves as cofactor.

In Mycoplasma pneumoniae (strain ATCC 29342 / M129 / Subtype 1) (Mycoplasmoides pneumoniae), this protein is Oligoendopeptidase F homolog (pepF).